A 218-amino-acid polypeptide reads, in one-letter code: Cytidylate kinase (218 aa).

10 to 18 (GPAAAGKST) lines the ATP pocket.

It belongs to the cytidylate kinase family. Type 1 subfamily.

Its subcellular location is the cytoplasm. It carries out the reaction CMP + ATP = CDP + ADP. It catalyses the reaction dCMP + ATP = dCDP + ADP. The chain is Cytidylate kinase from Staphylococcus haemolyticus (strain JCSC1435).